We begin with the raw amino-acid sequence, 773 residues long: MQRPPPEDFSLKETRPHLGGGKLSGDKLTSTYDLVEQMQYLYVRVVKAKELPGKDMTGSCDPYVEVKLGNYKGTTRHFEKKSNPEWNQVFAFSKDRIQASFLEATVKDKDFVKDDLIGRVVFDLNEVPKRVPPDSPLAPQWYRLEDRKGDKVKGELMLAVWFGTQADEAFPEAWHSDAATVSGTDALANIRSKVYLSPKLWYLRVNVIEAQDLIPTDKQRYPEVYVKAIVGNQALRTRVSQSRTINPMWNEDLMFVAAEPFEEPLILSVEDRVAPNKDEVLGRCAIPLQYLDRRFDHKPVNSRWYNLEKHIMVDGEKKETKFASRIHMRICLEGGYHVLDESTHYSSDLRPTAKQLWKPNIGVLELGILNATGLMPMKTKDGRGTTDAYCVAKYGQKWIRTRTIIDSFTPRWNEQYTWEVFDPCTVVTVGVFDNCHLHGGEKIGGAKDSRIGKVRIRLSTLETDRVYTHSYPLLVLHPNGVKKMGEIHLAVRFTCSSLLNMMYMYSQPLLPKMHYIHPLTVSQLDNLRHQATQIVSMRLTRAEPPLRKEVVEYMLDVGSHMWSMRRSKANFFRIMGVLSGLIAVGKWFEQICNWKNPITTVLIHLLFIILVLYPELILPTIFLYLFLIGIWYYRWRPRHPPHMDTRLSHADSAHPDELDEEFDTFPTSRPSDIVRMRYDRLRSIAGRIQTVVGDLATQGERLQSLLSWRDPRATALFVLFCLIAAVILYVTPFQVVALCIGIYALRHPRFRYKLPSVPLNFFRRLPARTDCML.

The segment covering 1–16 (MQRPPPEDFSLKETRP) has biased composition (basic and acidic residues). A disordered region spans residues 1–24 (MQRPPPEDFSLKETRPHLGGGKLS). 3 C2 domains span residues 22–142 (KLSG…PQWY), 181–305 (VSGT…SRWY), and 345–471 (YSSD…THSY). Ca(2+)-binding residues include aspartate 55, aspartate 61, aspartate 108, aspartate 110, and aspartate 115. 3 helical membrane passes run 574–594 (IMGV…ICNW), 608–628 (IILV…LFLI), and 716–736 (LFVL…FQVV).

Belongs to the MCTP family. In terms of assembly, interacts with and regulates subcellular localization and trafficking of STM. It depends on Ca(2+) as a cofactor. In terms of tissue distribution, accumulates in vascular tissues, leaf primordia and flowers. Highly expressed in roots meristems and in both vegetative and inflorescence shoot apical meristems (SAMs).

Its subcellular location is the endoplasmic reticulum membrane. The protein localises to the cytoplasm. The protein resides in the vesicle. It localises to the cell membrane. It is found in the endosome membrane. Its subcellular location is the golgi apparatus membrane. Its function is as follows. Required for proliferation and differentiation of shoot stem cells in the shoot apical meristem (SAM), thus determining the appropriate balance between the maintenance of shoot stem cells and their differentiation into other aboveground plant parts via the control of subcellular localization and intercellular trafficking of STM in the shoot apex. Prevents intracellular trafficking of STM to the plasma membrane in cells in the peripheral shoot meristem region thus facilitating STM recycling to the nucleus to maintain stem cells. May function as a signaling molecule by regulating the trafficking of other regulators. The polypeptide is FT-interacting protein 3 (Arabidopsis thaliana (Mouse-ear cress)).